Here is a 510-residue protein sequence, read N- to C-terminus: 2,3-bisphosphoglycerate-independent phosphoglycerate mutase (510 aa).

Mn(2+)-binding residues include Asp-13 and Ser-63. Catalysis depends on Ser-63, which acts as the Phosphoserine intermediate. Residues His-124, 154-155, Arg-186, Arg-192, 262-265, and Lys-334 each bind substrate; these read RD and RADR. Asp-401, His-405, Asp-442, His-443, and His-461 together coordinate Mn(2+).

This sequence belongs to the BPG-independent phosphoglycerate mutase family. Monomer. Mn(2+) serves as cofactor.

It catalyses the reaction (2R)-2-phosphoglycerate = (2R)-3-phosphoglycerate. It functions in the pathway carbohydrate degradation; glycolysis; pyruvate from D-glyceraldehyde 3-phosphate: step 3/5. In terms of biological role, catalyzes the interconversion of 2-phosphoglycerate and 3-phosphoglycerate. This is 2,3-bisphosphoglycerate-independent phosphoglycerate mutase from Aliivibrio fischeri (strain ATCC 700601 / ES114) (Vibrio fischeri).